The following is a 222-amino-acid chain: Probable transaldolase (222 aa).

Lys-91 (schiff-base intermediate with substrate) is an active-site residue.

This sequence belongs to the transaldolase family. Type 3B subfamily.

It is found in the cytoplasm. It catalyses the reaction D-sedoheptulose 7-phosphate + D-glyceraldehyde 3-phosphate = D-erythrose 4-phosphate + beta-D-fructose 6-phosphate. It functions in the pathway carbohydrate degradation; pentose phosphate pathway; D-glyceraldehyde 3-phosphate and beta-D-fructose 6-phosphate from D-ribose 5-phosphate and D-xylulose 5-phosphate (non-oxidative stage): step 2/3. In terms of biological role, transaldolase is important for the balance of metabolites in the pentose-phosphate pathway. This Chlorobaculum tepidum (strain ATCC 49652 / DSM 12025 / NBRC 103806 / TLS) (Chlorobium tepidum) protein is Probable transaldolase.